Reading from the N-terminus, the 491-residue chain is MKERKVIIKTGLNLENSYASLPEIFFTRQSPSRIPSPKLAVLNYPLITSLELNAQVLQSADGVDILAGNKTPEEAIPLAQAYAGHQFGHFTMLGDGRALLLGEHITPLGDRFDIQLKGSGKTPYSRGGDGKAALGPMLREYIISEAMNALGIPTTRSLAVVTTGESIIRETKLPGAILTRVAASHIRVGTFEYVSRWGTVEELRALADYTLQRHFKEGYDKENPYLFLLQEVIKKQAELIAKWQLVGFVHGVMNTDNMTISGETIDYGPCAFMDVYDPETVFSSIDIYGRYAYGNQPNIAAWNLARFAETLLPLLNIDPNEAIKIAENAISDFTKLYKNNWLSGMRAKLGVFNQELEDEYLIEDLLSIMNKYGSDYTNTFRTLTSGNIEDTVLLGKMEFDKWYKLWQERLTRQEESRLSSKQLMKSSNPSVIPRNHRVEEALEAAVKEGDYSVMEKLLDALSKPYAYSKEQDYYSKLPEPSTCPYQTYCGT.

Residues glycine 94, glycine 96, arginine 97, lysine 117, aspartate 129, glycine 130, arginine 180, and arginine 187 each contribute to the ATP site. Aspartate 256 functions as the Proton acceptor in the catalytic mechanism. Mg(2+)-binding residues include asparagine 257 and aspartate 266. Aspartate 266 contributes to the ATP binding site.

Belongs to the SELO family. The cofactor is Mg(2+). Requires Mn(2+) as cofactor.

The catalysed reaction is L-seryl-[protein] + ATP = 3-O-(5'-adenylyl)-L-seryl-[protein] + diphosphate. It catalyses the reaction L-threonyl-[protein] + ATP = 3-O-(5'-adenylyl)-L-threonyl-[protein] + diphosphate. The enzyme catalyses L-tyrosyl-[protein] + ATP = O-(5'-adenylyl)-L-tyrosyl-[protein] + diphosphate. It carries out the reaction L-histidyl-[protein] + UTP = N(tele)-(5'-uridylyl)-L-histidyl-[protein] + diphosphate. The catalysed reaction is L-seryl-[protein] + UTP = O-(5'-uridylyl)-L-seryl-[protein] + diphosphate. It catalyses the reaction L-tyrosyl-[protein] + UTP = O-(5'-uridylyl)-L-tyrosyl-[protein] + diphosphate. Functionally, nucleotidyltransferase involved in the post-translational modification of proteins. It can catalyze the addition of adenosine monophosphate (AMP) or uridine monophosphate (UMP) to a protein, resulting in modifications known as AMPylation and UMPylation. The polypeptide is Protein nucleotidyltransferase YdiU (Clostridium botulinum (strain Loch Maree / Type A3)).